The chain runs to 342 residues: tRNA N6-adenosine threonylcarbamoyltransferase (342 aa).

Fe cation is bound by residues histidine 119 and histidine 123. Residues 142–146 (VVSGG), aspartate 175, glycine 188, and asparagine 282 contribute to the substrate site. Aspartate 310 lines the Fe cation pocket.

The protein belongs to the KAE1 / TsaD family. It depends on Fe(2+) as a cofactor.

Its subcellular location is the cytoplasm. It carries out the reaction L-threonylcarbamoyladenylate + adenosine(37) in tRNA = N(6)-L-threonylcarbamoyladenosine(37) in tRNA + AMP + H(+). Its function is as follows. Required for the formation of a threonylcarbamoyl group on adenosine at position 37 (t(6)A37) in tRNAs that read codons beginning with adenine. Is involved in the transfer of the threonylcarbamoyl moiety of threonylcarbamoyl-AMP (TC-AMP) to the N6 group of A37, together with TsaE and TsaB. TsaD likely plays a direct catalytic role in this reaction. In Moorella thermoacetica (strain ATCC 39073 / JCM 9320), this protein is tRNA N6-adenosine threonylcarbamoyltransferase.